The primary structure comprises 856 residues: Inactive rhomboid protein 1 (856 aa).

The tract at residues 1–21 (MGEARRDSSSSLQHKKPPWLK) is disordered. Residues 1–412 (MGEARRDSSS…HRPFFTYWLT (412 aa)) lie on the Cytoplasmic side of the membrane. Ser-76 and Ser-176 each carry phosphoserine. Phosphothreonine occurs at positions 180 and 183. Ser-391 carries the phosphoserine modification. The chain crosses the membrane as a helical span at residues 413-433 (FVHSLVTILAVCIYGVAPVGF). Topologically, residues 434–656 (SQHETVDSVL…NPEVPDQFYR (223 aa)) are lumenal. Asn-584 is a glycosylation site (N-linked (GlcNAc...) asparagine). The chain crosses the membrane as a helical span at residues 657–677 (LWLSLFLHAGVLHCLVSVCFQ). Over 678–692 (MTVLRDLEKLAGWHR) the chain is Cytoplasmic. The chain crosses the membrane as a helical span at residues 693–713 (IAIIYLLSGVTGNLASAIFLP). Over 714–715 (YR) the chain is Lumenal. The chain crosses the membrane as a helical span at residues 716-736 (AEVGPAGSQFGILACLFVELF). The Cytoplasmic portion of the chain corresponds to 737–747 (QSWQILARPWR). A helical membrane pass occupies residues 748–768 (AFFKLLAVVLFLFTFGLLPWI). The Lumenal portion of the chain corresponds to 769-773 (DNFAH). A helical membrane pass occupies residues 774 to 794 (ISGFISGLFLSFAFLPYISFG). The Cytoplasmic portion of the chain corresponds to 795 to 804 (KFDLYRKRCQ). Residues 805-825 (IIVFQLVFLGLLAGLVVLFYF) traverse the membrane as a helical segment. Residues 826-856 (YPVRCEWCEFLTCIPFTDKFCEKYELDAQLH) are Lumenal-facing.

The protein belongs to the peptidase S54 family. Homodimer, or homooligomer. Interacts with TGFA and HBEGF. Interacts with EGF; may retain EGF in the endoplasmic reticulum and regulates its degradation through the endoplasmic reticulum-associated degradation (ERAD). Interacts (via cytoplasmic N-terminus) with FRMD8/iTAP; this interaction leads to mutual protein stabilization. Interacts with ADAM17/TACE.

The protein localises to the endoplasmic reticulum membrane. It localises to the golgi apparatus membrane. Regulates ADAM17 protease, a sheddase of the epidermal growth factor (EGF) receptor ligands and TNF, thereby plays a role in sleep, cell survival, proliferation, migration and inflammation. Does not exhibit any protease activity on its own. This is Inactive rhomboid protein 1 (RHBDF1) from Bos taurus (Bovine).